The sequence spans 201 residues: Dynactin subunit 6 (201 aa).

Belongs to the dynactin subunits 5/6 family. Dynactin subunit 6 subfamily. In terms of assembly, member of the pointed-end complex of the dynactin shoulder complex which contains dctn4, dctn5 and dctn6 subunits and Actr10. Within the complex dctn6 forms a heterodimer with dctn5. Interacts with plk1.

It localises to the cytoplasm. The protein localises to the cytoskeleton. It is found in the chromosome. The protein resides in the centromere. Its subcellular location is the kinetochore. Its function is as follows. Part of the dynactin complex that activates the molecular motor dynein for ultra-processive transport along microtubules. This chain is Dynactin subunit 6 (dctn6), found in Xenopus tropicalis (Western clawed frog).